We begin with the raw amino-acid sequence, 128 residues long: Cyclic ether formation enzyme gkaZ (128 aa).

A signal peptide spans 1–36 (MTTARALSDGLAYLLACFNAFCIQAHLTSRFSPAFS). Transmembrane regions (helical) follow at residues 61–81 (LRYM…LPGW) and 107–127 (WLLH…AIYV).

It belongs to the cyclic ether formation enzyme xenC family.

The protein localises to the membrane. Its pathway is mycotoxin biosynthesis. In terms of biological role, cyclic ether formation enzyme; part of the gene cluster that mediates the biosynthesis of GKK1032, fungal natural products containing a macrocyclic para-cyclophane connected to a decahydrofluorene ring system that show potent antitumor activities. Within the pathway, gkaZ functions synergistically with gkaB and gkaX to form the cyclophane. The pathway begins with the PKS-NRPS gkaA which, with the help of the trans-enoyl reductase gkaC, synthesizes the polyketide-tyrosyl acyl thioester product which can be reductively off-loaded by the terminal reductase (R) domain in gkaA. The alpha/beta hydrolase gkaG is then required to catalyze the subsequent Knoevenagel condensation that affords the 3-pyrrolin-2-one ring, whereas the three proteins gkaB, gkaX and gkaZ then function synergistically to form the cyclophane. In Penicillium citrinum, this protein is Cyclic ether formation enzyme gkaZ.